Reading from the N-terminus, the 419-residue chain is UDP-N-acetylglucosamine 1-carboxyvinyltransferase (419 aa).

Residue 22–23 (KN) coordinates phosphoenolpyruvate. Residue arginine 95 coordinates UDP-N-acetyl-alpha-D-glucosamine. Cysteine 119 functions as the Proton donor in the catalytic mechanism. A 2-(S-cysteinyl)pyruvic acid O-phosphothioketal modification is found at cysteine 119. UDP-N-acetyl-alpha-D-glucosamine-binding positions include 164-167 (KVSV), aspartate 308, and isoleucine 330.

The protein belongs to the EPSP synthase family. MurA subfamily.

It localises to the cytoplasm. The catalysed reaction is phosphoenolpyruvate + UDP-N-acetyl-alpha-D-glucosamine = UDP-N-acetyl-3-O-(1-carboxyvinyl)-alpha-D-glucosamine + phosphate. Its pathway is cell wall biogenesis; peptidoglycan biosynthesis. Its function is as follows. Cell wall formation. Adds enolpyruvyl to UDP-N-acetylglucosamine. This is UDP-N-acetylglucosamine 1-carboxyvinyltransferase from Rickettsia africae (strain ESF-5).